The chain runs to 106 residues: Small ribosomal subunit protein uS10 (106 aa).

Belongs to the universal ribosomal protein uS10 family. In terms of assembly, part of the 30S ribosomal subunit.

Its function is as follows. Involved in the binding of tRNA to the ribosomes. The sequence is that of Small ribosomal subunit protein uS10 from Prochlorococcus marinus (strain MIT 9211).